Here is a 294-residue protein sequence, read N- to C-terminus: Homoserine kinase (294 aa).

83 to 93 contacts ATP; sequence PLARGLGSSAS.

It belongs to the GHMP kinase family. Homoserine kinase subfamily.

The protein resides in the cytoplasm. It carries out the reaction L-homoserine + ATP = O-phospho-L-homoserine + ADP + H(+). Its pathway is amino-acid biosynthesis; L-threonine biosynthesis; L-threonine from L-aspartate: step 4/5. In terms of biological role, catalyzes the ATP-dependent phosphorylation of L-homoserine to L-homoserine phosphate. This is Homoserine kinase from Oceanobacillus iheyensis (strain DSM 14371 / CIP 107618 / JCM 11309 / KCTC 3954 / HTE831).